The following is a 99-amino-acid chain: NADH-ubiquinone oxidoreductase chain 4L (99 aa).

3 helical membrane-spanning segments follow: residues 1 to 21 (MTIY…FFTQ), 25 to 45 (ILSL…SVAV), and 56 to 76 (VMIL…SLLV).

This sequence belongs to the complex I subunit 4L family.

The protein localises to the mitochondrion membrane. The catalysed reaction is a ubiquinone + NADH + 5 H(+)(in) = a ubiquinol + NAD(+) + 4 H(+)(out). Functionally, core subunit of the mitochondrial membrane respiratory chain NADH dehydrogenase (Complex I) that is believed to belong to the minimal assembly required for catalysis. Complex I functions in the transfer of electrons from NADH to the respiratory chain. The immediate electron acceptor for the enzyme is believed to be ubiquinone. This Albinaria caerulea (Land snail) protein is NADH-ubiquinone oxidoreductase chain 4L (ND4L).